The primary structure comprises 1122 residues: Midnolin homolog (1122 aa).

The region spanning 69 to 143 (INLNISTTTG…IILIPNVETG (75 aa)) is the Ubiquitin-like domain. Residues 210-300 (GGASGSSINA…SGQRSSGRIG (91 aa)) are required for interaction with Pc. 8 disordered regions span residues 257 to 399 (VGGS…STLN), 596 to 630 (KHRHYHGQGHGHGHGNGHSSSSSSSSSSSSSHFFN), 645 to 677 (FATSSSSSSSSPSSSSSSPSKRRKLEQGMGAGA), 746 to 775 (GVVSSGRSSSSGATSSGAASGEEAPRKSGS), 840 to 876 (APTTGSVSGSGSGSGSSGSSSTTSSGSGLHHGSRSKM), 886 to 905 (KCNSRAQQQQQQSATLASGS), 922 to 955 (AATKASTSSKSSSHSCCQTAEAPSSMTSQSNGCT), and 1067 to 1122 (AAPA…DTAA). A compositionally biased stretch (low complexity) spans 266–298 (SGTSSSSSSTSSSSSSSSSSSRTRSSGQRSSGR). Basic residues-rich tracts occupy residues 300–310 (GHGHVHSHQHP) and 321–352 (SHGHGHGHSHGNGHGHHHHHHHHHHHHHHHHN). Over residues 375–397 (PSSSGASGSAPATGTGQSQSSST) the composition is skewed to low complexity. Residues 596–610 (KHRHYHGQGHGHGHG) are compositionally biased toward basic residues. Composition is skewed to low complexity over residues 612 to 627 (GHSSSSSSSSSSSSSH), 648 to 663 (SSSSSSSSPSSSSSSP), 746 to 766 (GVVSSGRSSSSGATSSGAASG), 856 to 867 (SGSSSTTSSGSG), 889 to 903 (SRAQQQQQQSATLAS), and 922 to 936 (AATKASTSSKSSSHS). 2 stretches are compositionally biased toward polar residues: residues 937-954 (CCQTAEAPSSMTSQSNGC) and 1071-1085 (NSITGNSSNANVNGN). Residues 1086–1107 (TSTAPATAATSAAAAPTAAPPS) show a composition bias toward low complexity.

In terms of assembly, interacts with PRC1 complex member polycomb protein Pc; the interaction targets Pc for ubiquitin-independent proteasomal degradation. Does not interact with PRC1 members Ph, Psc or Sce so does not appear to be a member of the PRC1 complex. Interacts with 26S proteasome regulatory subunit Rpn10.

Its subcellular location is the nucleus. In terms of biological role, facilitates ubiquitin-independent proteasomal degradation of polycomb protein Pc by interacting directly with the proteasome and recruiting Pc to it. The protein is Midnolin homolog of Drosophila melanogaster (Fruit fly).